A 160-amino-acid chain; its full sequence is Protein-export protein SecB (160 aa).

Belongs to the SecB family. In terms of assembly, homotetramer, a dimer of dimers. One homotetramer interacts with 1 SecA dimer.

It localises to the cytoplasm. One of the proteins required for the normal export of preproteins out of the cell cytoplasm. It is a molecular chaperone that binds to a subset of precursor proteins, maintaining them in a translocation-competent state. It also specifically binds to its receptor SecA. This Rhodospirillum rubrum (strain ATCC 11170 / ATH 1.1.1 / DSM 467 / LMG 4362 / NCIMB 8255 / S1) protein is Protein-export protein SecB.